Consider the following 266-residue polypeptide: MGYLKRLVLYIVIMVMSVFIIGCDKSSDTAEKSKEDSKETQIKKSFAKTLDMYSIKNLEELYDKEGYRDGEFEKGDKGMWTIYTDFAKSNKPGELSNEGMVLYLDRNTRTAKGYYFVRTFYRKDKLPDRKNYKVEMKNNKIILLDKVEDKKLKQKIENFKFFSQYANLKELKNYSNGDVSINENVPSYDVKYKMSNKDENVKQLRSRYNIPTDKSPVLKMHIDGNLKGSSVGDRKLEIDFSKRENSHLSVIDSLDYQPAKTNKDDE.

The N-terminal stretch at 1–22 (MGYLKRLVLYIVIMVMSVFIIG) is a signal peptide. Cys23 carries N-palmitoyl cysteine lipidation. Cys23 is lipidated: S-diacylglycerol cysteine.

It belongs to the staphylococcal tandem lipoprotein family.

The protein localises to the cell membrane. This is an uncharacterized protein from Staphylococcus aureus (strain USA300).